A 467-amino-acid polypeptide reads, in one-letter code: UDP-N-acetylmuramoylalanine--D-glutamate ligase (467 aa).

115 to 121 (GTDGKTT) contacts ATP.

Belongs to the MurCDEF family.

It is found in the cytoplasm. The catalysed reaction is UDP-N-acetyl-alpha-D-muramoyl-L-alanine + D-glutamate + ATP = UDP-N-acetyl-alpha-D-muramoyl-L-alanyl-D-glutamate + ADP + phosphate + H(+). The protein operates within cell wall biogenesis; peptidoglycan biosynthesis. Its function is as follows. Cell wall formation. Catalyzes the addition of glutamate to the nucleotide precursor UDP-N-acetylmuramoyl-L-alanine (UMA). The chain is UDP-N-acetylmuramoylalanine--D-glutamate ligase from Chlorobaculum parvum (strain DSM 263 / NCIMB 8327) (Chlorobium vibrioforme subsp. thiosulfatophilum).